A 594-amino-acid polypeptide reads, in one-letter code: Alanine--tRNA ligase (594 aa).

Zn(2+) contacts are provided by H456, H460, C558, and H562.

Belongs to the class-II aminoacyl-tRNA synthetase family. It depends on Zn(2+) as a cofactor.

Its subcellular location is the cytoplasm. The enzyme catalyses tRNA(Ala) + L-alanine + ATP = L-alanyl-tRNA(Ala) + AMP + diphosphate. Catalyzes the attachment of alanine to tRNA(Ala) in a two-step reaction: alanine is first activated by ATP to form Ala-AMP and then transferred to the acceptor end of tRNA(Ala). Also edits incorrectly charged Ser-tRNA(Ala) and Gly-tRNA(Ala) via its editing domain. This Borrelia garinii subsp. bavariensis (strain ATCC BAA-2496 / DSM 23469 / PBi) (Borreliella bavariensis) protein is Alanine--tRNA ligase (alaS).